The sequence spans 101 residues: NADH-quinone oxidoreductase subunit K (101 aa).

3 consecutive transmembrane segments (helical) span residues 4–24, 29–49, and 65–85; these read LSHY…GIFI, IIVI…NLVA, and FVLT…VVFF.

It belongs to the complex I subunit 4L family. NDH-1 is composed of 14 different subunits. Subunits NuoA, H, J, K, L, M, N constitute the membrane sector of the complex.

It is found in the cell inner membrane. The catalysed reaction is a quinone + NADH + 5 H(+)(in) = a quinol + NAD(+) + 4 H(+)(out). Its function is as follows. NDH-1 shuttles electrons from NADH, via FMN and iron-sulfur (Fe-S) centers, to quinones in the respiratory chain. The immediate electron acceptor for the enzyme in this species is believed to be ubiquinone. Couples the redox reaction to proton translocation (for every two electrons transferred, four hydrogen ions are translocated across the cytoplasmic membrane), and thus conserves the redox energy in a proton gradient. The chain is NADH-quinone oxidoreductase subunit K from Methylobacterium nodulans (strain LMG 21967 / CNCM I-2342 / ORS 2060).